Here is a 261-residue protein sequence, read N- to C-terminus: Endomucin (261 aa).

A signal peptide spans 1 to 18 (MELLQVTILFLLPSICSS). N-linked (GlcNAc...) asparagine glycans are attached at residues asparagine 19, asparagine 28, asparagine 98, and asparagine 104. The Extracellular portion of the chain corresponds to 19 to 190 (NSTGVLEAAN…TSATSRSYSS (172 aa)). Composition is skewed to polar residues over residues 118 to 134 (TLQS…SIKT) and 146 to 171 (ASPS…SQVI). Residues 118 to 183 (TLQSSKPKTE…EGGKNASTSA (66 aa)) form a disordered region. N-linked (GlcNAc...) asparagine glycans are attached at residues asparagine 164 and asparagine 178. A helical membrane pass occupies residues 191–211 (IILPVVIALIVITLSVFVLVG). Topologically, residues 212 to 261 (LYRMCWKADPGTPENGNDQPQSDKESVKLLTVKTISHESGEHSAQGKTKN) are cytoplasmic. Phosphoserine is present on serine 237.

In terms of processing, highly O-glycosylated. Sialic acid-rich glycoprotein. In terms of tissue distribution, expressed in heart, kidney and lung.

The protein localises to the cell membrane. The protein resides in the membrane. It localises to the secreted. Functionally, endothelial sialomucin, also called endomucin or mucin-like sialoglycoprotein, which interferes with the assembly of focal adhesion complexes and inhibits interaction between cells and the extracellular matrix. The protein is Endomucin (EMCN) of Homo sapiens (Human).